A 526-amino-acid polypeptide reads, in one-letter code: ESX-1 secretion-associated protein EspB (526 aa).

Basic and acidic residues predominate over residues 1–23; sequence MSEELKYELPGLERKAHECESTR. Disordered stretches follow at residues 1 to 35, 91 to 110, and 271 to 526; these read MSEELKYELPGLERKAHECESTRPEGPGDATKPDE, RQMNGSDAPPPAAEAVVPDM, and QIQE…GKQQ. Residues 303 to 328 are compositionally biased toward gly residues; it reads GGPGGPGSGSGGGSGGGASGGSGGGT. Residues 335–362 show a composition bias toward low complexity; sequence PSTDPSMSPMSTNSAGEEQSSGSPSSGG. Gly residues predominate over residues 363 to 387; that stretch reads SSSGGSPSGGSPSGGGAPSSGGMPE. Low complexity predominate over residues 393–405; it reads DMPGGPDIPGLDD. Over residues 413–429 the composition is skewed to gly residues; it reads AGGGGGGGVGGGGGGGM. Residues 430-440 are compositionally biased toward low complexity; it reads PAAPLGPAVGA. A compositionally biased stretch (gly residues) spans 451-484; sequence RGGGVGVPTGTGGGAGGMMGGGMGGMGAGHGQGQ. Basic and acidic residues predominate over residues 485 to 508; it reads GKEKKRDPKLAPDEDLYTEDRAHS.

This sequence belongs to the EspB family.

The protein resides in the secreted. Its function is as follows. Involved in DNA conjugation, at least in the recipient strain. The chain is ESX-1 secretion-associated protein EspB from Mycolicibacterium smegmatis (strain MKD8) (Mycobacterium smegmatis).